The primary structure comprises 177 residues: Large ribosomal subunit protein uL6 (177 aa).

It belongs to the universal ribosomal protein uL6 family. In terms of assembly, part of the 50S ribosomal subunit.

This protein binds to the 23S rRNA, and is important in its secondary structure. It is located near the subunit interface in the base of the L7/L12 stalk, and near the tRNA binding site of the peptidyltransferase center. This Aeromonas salmonicida (strain A449) protein is Large ribosomal subunit protein uL6.